Here is a 169-residue protein sequence, read N- to C-terminus: Der GTPase-activating protein YihI (169 aa).

Disordered regions lie at residues 1 to 100 (MKPS…AELE) and 144 to 169 (GLSY…LRGN). The span at 10 to 19 (SKGHAKARRK) shows a compositional bias: basic residues. The segment covering 20–30 (TREELDQEARD) has biased composition (basic and acidic residues). The segment covering 31–40 (RKRQKKRRGH) has biased composition (basic residues). Residues 49–58 (GNTTSGSKGQ) are compositionally biased toward polar residues. A compositionally biased stretch (acidic residues) spans 147–159 (YDDDEEEEEDEKQ). Over residues 160–169 (EDMMRLLRGN) the composition is skewed to basic and acidic residues.

This sequence belongs to the YihI family. As to quaternary structure, interacts with Der.

Functionally, a GTPase-activating protein (GAP) that modifies Der/EngA GTPase function. May play a role in ribosome biogenesis. The sequence is that of Der GTPase-activating protein YihI from Escherichia coli O6:H1 (strain CFT073 / ATCC 700928 / UPEC).